Here is a 425-residue protein sequence, read N- to C-terminus: Serine--tRNA ligase (425 aa).

Residue 232 to 234 coordinates L-serine; that stretch reads TSE. Residues 263 to 265 and valine 279 each bind ATP; that span reads RRE. L-serine is bound at residue glutamate 286. Residue 350-353 coordinates ATP; that stretch reads EVVS. An L-serine-binding site is contributed by threonine 387.

This sequence belongs to the class-II aminoacyl-tRNA synthetase family. Type-1 seryl-tRNA synthetase subfamily. Homodimer. The tRNA molecule binds across the dimer.

It localises to the cytoplasm. It catalyses the reaction tRNA(Ser) + L-serine + ATP = L-seryl-tRNA(Ser) + AMP + diphosphate + H(+). The catalysed reaction is tRNA(Sec) + L-serine + ATP = L-seryl-tRNA(Sec) + AMP + diphosphate + H(+). It participates in aminoacyl-tRNA biosynthesis; selenocysteinyl-tRNA(Sec) biosynthesis; L-seryl-tRNA(Sec) from L-serine and tRNA(Sec): step 1/1. Catalyzes the attachment of serine to tRNA(Ser). Is also able to aminoacylate tRNA(Sec) with serine, to form the misacylated tRNA L-seryl-tRNA(Sec), which will be further converted into selenocysteinyl-tRNA(Sec). This Methanocella arvoryzae (strain DSM 22066 / NBRC 105507 / MRE50) protein is Serine--tRNA ligase.